We begin with the raw amino-acid sequence, 202 residues long: Tetratricopeptide repeat protein 36 (202 aa).

TPR repeat units lie at residues alanine 49–arginine 82, alanine 83–alanine 116, and arginine 121–phenylalanine 154.

This sequence belongs to the TTC36 family.

This chain is Tetratricopeptide repeat protein 36 (ttc36), found in Xenopus tropicalis (Western clawed frog).